A 118-amino-acid chain; its full sequence is MLGAYLPILVLVVIAVLFGLGSVIFSSLIGQKKPSTVKLAPYECGCEPVGSARERFSIKFYLIAMLFILFDIEAVFLYPWAVLFKRLGMFGLIEMGVFIVILFVGYVYVWKKGALEWE.

A run of 3 helical transmembrane segments spans residues 5–25 (YLPI…SVIF), 62–82 (LIAM…PWAV), and 87–107 (LGMF…VGYV).

The protein belongs to the complex I subunit 3 family. As to quaternary structure, NDH-1 is composed of 14 different subunits. Subunits NuoA, H, J, K, L, M, N constitute the membrane sector of the complex.

Its subcellular location is the cell inner membrane. The enzyme catalyses a quinone + NADH + 5 H(+)(in) = a quinol + NAD(+) + 4 H(+)(out). Functionally, NDH-1 shuttles electrons from NADH, via FMN and iron-sulfur (Fe-S) centers, to quinones in the respiratory chain. The immediate electron acceptor for the enzyme in this species is believed to be ubiquinone. Couples the redox reaction to proton translocation (for every two electrons transferred, four hydrogen ions are translocated across the cytoplasmic membrane), and thus conserves the redox energy in a proton gradient. The sequence is that of NADH-quinone oxidoreductase subunit A 2 from Citrifermentans bemidjiense (strain ATCC BAA-1014 / DSM 16622 / JCM 12645 / Bem) (Geobacter bemidjiensis).